The primary structure comprises 275 residues: Vitamin B12-binding protein (275 aa).

The first 27 residues, 1-27 (MKWIKSTGSIGLSLLLFLSSFSHSLYA), serve as a signal peptide directing secretion. Residues 31 to 275 (RVISLSPSTT…LCQQLNDNGS (245 aa)) form the Fe/B12 periplasmic-binding domain. A cyanocob(III)alamin-binding site is contributed by Y58. A disulfide bond links C191 and C267.

Belongs to the BtuF family. In terms of assembly, the complex is composed of two ATP-binding proteins (BtuD), two transmembrane proteins (BtuC) and a solute-binding protein (BtuF).

It localises to the periplasm. Part of the ABC transporter complex BtuCDF involved in vitamin B12 import. Binds vitamin B12 and delivers it to the periplasmic surface of BtuC. This Photorhabdus laumondii subsp. laumondii (strain DSM 15139 / CIP 105565 / TT01) (Photorhabdus luminescens subsp. laumondii) protein is Vitamin B12-binding protein.